The primary structure comprises 311 residues: Olfactory receptor 10J4 (311 aa).

Over 1 to 29 the chain is Extracellular; sequence MPRPNFMAVTEFTFEGFSIFEWHHRLILF. Residues 30–50 traverse the membrane as a helical segment; the sequence is VIFLVLYVLTLASNAIILIVI. At 51-57 the chain is on the cytoplasmic side; that stretch reads RLNHQLH. The helical transmembrane segment at 58–78 threads the bilayer; that stretch reads TPMYFFLSVLSISETYYTVAI. At 79-98 the chain is on the extracellular side; sequence NPQMLSGLLSPQQTISIPGC. Cysteines 98 and 180 form a disulfide. A helical membrane pass occupies residues 99–119; sequence AAQLFFYLTFGVNKCFLLTAM. The Cytoplasmic segment spans residues 120 to 149; that stretch reads GYDHYVAICNPLQYSVIMGKKACIQLVSGS. Residues 150 to 170 form a helical membrane-spanning segment; the sequence is WNIGLSTAIIQVSSVFSLPFC. Residues 171–202 are Extracellular-facing; sequence DANLISHFFCDIRPIMKLACADTTIKEFITLL. Residues 203–223 traverse the membrane as a helical segment; it reads ISLCVLVLPMVLIFISYVLIV. At 224 to 237 the chain is on the cytoplasmic side; the sequence is TTILKIASAEGRRK. Residues 238-254 traverse the membrane as a helical segment; the sequence is AFATCASHLTVVIVHYG. Residues 255-272 lie on the Extracellular side of the membrane; that stretch reads RTSFIYLKPKSQNSLQDR. A helical membrane pass occupies residues 273–292; that stretch reads LISVTYTVITPLLNPVVYSL. Residues 293-311 lie on the Cytoplasmic side of the membrane; the sequence is RNKEVKDALLRALGRKPLS.

Belongs to the G-protein coupled receptor 1 family.

The protein resides in the cell membrane. Odorant receptor. This chain is Olfactory receptor 10J4 (OR10J4), found in Homo sapiens (Human).